The primary structure comprises 103 residues: Small ribosomal subunit protein uS10 (103 aa).

This sequence belongs to the universal ribosomal protein uS10 family. Part of the 30S ribosomal subunit.

In terms of biological role, involved in the binding of tRNA to the ribosomes. The protein is Small ribosomal subunit protein uS10 of Korarchaeum cryptofilum (strain OPF8).